A 458-amino-acid chain; its full sequence is Exodeoxyribonuclease 7 large subunit (458 aa).

It belongs to the XseA family. Heterooligomer composed of large and small subunits.

It is found in the cytoplasm. The catalysed reaction is Exonucleolytic cleavage in either 5'- to 3'- or 3'- to 5'-direction to yield nucleoside 5'-phosphates.. Bidirectionally degrades single-stranded DNA into large acid-insoluble oligonucleotides, which are then degraded further into small acid-soluble oligonucleotides. The protein is Exodeoxyribonuclease 7 large subunit of Serratia proteamaculans (strain 568).